The sequence spans 246 residues: MAFLRSMWGVLSALGRSGAAVCIGCGSRLRSPFSFVYLPKCFSSVLASCPKKPVSSYLRFSKEQLPIFKAENPDAKPTELIRRIAKLWRELPDSKKKIYQDAYRADWQVYKEKISRFKEQLTPSQITSLEKEIMDKHLKRKAMTKRKELTQLGKPKRPRSAYNVYVAEKFQEAKGDSPQEKLKTVKENWKNLSDSEKELYIRLAKEDEIRYHNEMKSWEEQMIEAGRKDLLRRTIKQRQKYGAEEY.

The N-terminal 42 residues, 1–42 (MAFLRSMWGVLSALGRSGAAVCIGCGSRLRSPFSFVYLPKCF), are a transit peptide targeting the mitochondrion. Residues 50-118 (PKKPVSSYLR…VYKEKISRFK (69 aa)) constitute a DNA-binding region (HMG box 1). A phosphoserine; by PKA mark is found at Ser-55, Ser-56, and Ser-61. Residue Thr-122 is modified to Phosphothreonine. The HMG box 2 DNA-binding region spans 155 to 219 (PKRPRSAYNV…RYHNEMKSWE (65 aa)). Ser-160 is subject to Phosphoserine; by PKA. 2 positions are modified to phosphoserine: Ser-193 and Ser-195.

Monomer; binds DNA as a monomer. Homodimer. Component of the mitochondrial transcription initiation complex, composed at least of TFB2M, TFAM and POLRMT. In this complex TFAM recruits POLRMT to the promoter whereas TFB2M induces structural changes in POLRMT to enable promoter opening and trapping of the DNA non-template strand. Upon metabolic stress, forms a complex composed of FOXO3, SIRT3, TFAM and POLRMT. Interacts with TFB1M and TFB2M. Interacts with CLPX; this enhances DNA-binding. Post-translationally, phosphorylation by PKA within the HMG box 1 impairs DNA binding and promotes degradation by the AAA+ Lon protease.

The protein localises to the mitochondrion. It is found in the mitochondrion matrix. It localises to the mitochondrion nucleoid. In terms of biological role, binds to the mitochondrial light strand promoter and functions in mitochondrial transcription regulation. Component of the mitochondrial transcription initiation complex, composed at least of TFB2M, TFAM and POLRMT that is required for basal transcription of mitochondrial DNA. In this complex, TFAM recruits POLRMT to a specific promoter whereas TFB2M induces structural changes in POLRMT to enable promoter opening and trapping of the DNA non-template strand. Required for accurate and efficient promoter recognition by the mitochondrial RNA polymerase. Promotes transcription initiation from the HSP1 and the light strand promoter by binding immediately upstream of transcriptional start sites. Is able to unwind DNA. Bends the mitochondrial light strand promoter DNA into a U-turn shape via its HMG boxes. Required for maintenance of normal levels of mitochondrial DNA. May play a role in organizing and compacting mitochondrial DNA. This is Transcription factor A, mitochondrial from Trachypithecus cristatus (Silvered leaf-monkey).